The following is a 142-amino-acid chain: MKTFSAKAHEVKRDWLLVDADGKILGRFATQIASRLRGKHKPEYTPHTDTGDYIVIINASKIKVTGNKFEDKMYHHHTGYVGNLKSIAFKDLQAKKPEEIINKVVKGMLPKGPLGRDMFRKMKVFAGSEHTHGAQQPQVLDI.

This sequence belongs to the universal ribosomal protein uL13 family. Part of the 50S ribosomal subunit.

Its function is as follows. This protein is one of the early assembly proteins of the 50S ribosomal subunit, although it is not seen to bind rRNA by itself. It is important during the early stages of 50S assembly. The chain is Large ribosomal subunit protein uL13 from Ruthia magnifica subsp. Calyptogena magnifica.